A 485-amino-acid polypeptide reads, in one-letter code: RRQYNLSTSPLTSSVATGTNLVLYAAPLSPLLPLQDGTNTHIMATEASNYAQYRVVRATIRYRPLVPNAVGGYAISISFWPQTTTTPTSVDMNSITSTDVRILVQPGIASELVIPSERLHYRNQGWRSVETSGVAEEEATSGLVMLCIHGSPVNSYTNTPYTGALGLLDFALELEFRNLTPGNTNTRVSRYSSTARHRLRRGADGTAELTTTAATRFMKDLYFTSTNGVGEIGRGIALTLFNLADTLLGGLPTELISSAGGQLFYSRPVVSAHGEPTVKLYTSVENAQQDKGIAIPHDIDLGESRVVIQDYDNQHEQDRPTPSPAPSRPFSVLRANDVLWLSLTAAEYDQSTYGSSTAPVYVSDSVTLVNVATGAQAVARSLDWTKVTLDGRPLSTIQQYPKTFFVLPLRGKLSFWEAGTTKAGYPYNYNTTASDQLLVENAAGHRVAISTYTTSLGAGPVSISAVAVLAPHSALALLEDTLDYP.

2 N-linked (GlcNAc...) asparagine; by host glycosylation sites follow: N5 and N178. The tract at residues 236–262 (IALTLFNLADTLLGGLPTELISSAGGQ) is particle formation. N-linked (GlcNAc...) asparagine; by host glycosylation occurs at N430. Positions 453–478 (TTSLGAGPVSISAVAVLAPHSALALL) are oligomerization.

The protein belongs to the hepevirus capsid protein family. Self-assembles to form the capsid. The capsid is dominated by dimers that define the 30 morphological units. Interacts with phosphorylated protein ORF3. Interacts with host TMEM134. Interacts with host ASGR1 and ASGR2; these interactions facilitate infection of host hepatocytes. In terms of processing, not N-glycosylated.

Its subcellular location is the virion. It is found in the host cytoplasm. The protein localises to the host endoplasmic reticulum. The protein resides in the host Golgi apparatus. It localises to the host cell surface. Its subcellular location is the host nucleus. Forms an icosahedral capsid with a T=1 symmetry and a 34 nm diameter. The capsid is composed of 60 copies linked to each other. Binds to the 5' end of the genomic RNA to mediate genome encapsidation. Binds to heparin surface proteoglycans (HSPGs) to mediate viral entry. Additionally, the interactions with host ASGR1 and ASGR2 facilitate viral infection of hepatocytes. Inhibits IFN production by blocking host TBK1-induced IRF3 phosphorylation. The nuclear form probably modulates host gene expression. The chain is Caspid protein from Hepatitis E virus (isolate Rhesus/HT-4) (HEV).